We begin with the raw amino-acid sequence, 165 residues long: ISVCDLPADRGQCTAYIPQWFFNKTTEDCEKFVYGGCQGNANRFETKDDCIANCGCNLPSKVGPCRVSARMWFHNPETEKCEVFIYGGCHGNANRFATETECQEVCDRYQKPGFCYQPSETGPCKGSFPRYYYDYEDGECKEFIYGGCEGNANNFETKESCENAC.

A protein is bound by residues Ile-1 and Ser-2. The interval 1-2 (IS) is inserts into the active site groove of a carboxypeptidase and inhibits activity by emulating a C-terminal substrate. BPTI/Kunitz inhibitor domains are found at residues 4–54 (CDLP…IANC) and 56–106 (CNLP…QEVC). Cystine bridges form between Cys-4-Cys-54, Cys-13-Cys-37, Cys-29-Cys-50, Cys-56-Cys-106, Cys-65-Cys-89, and Cys-81-Cys-102. Asn-23 is a glycosylation site (N-linked (GlcNAc...) asparagine). 4 residues coordinate a protein: Tyr-109, Gln-110, Lys-111, and Gly-113. Positions 115–165 (CYQPSETGPCKGSFPRYYYDYEDGECKEFIYGGCEGNANNFETKESCENAC) constitute a BPTI/Kunitz inhibitor 3 domain. Disulfide bonds link Cys-115–Cys-165, Cys-124–Cys-148, and Cys-140–Cys-161.

Contains 9 disulfide bonds. In terms of tissue distribution, expressed in the tentacle crown. Not detected in annelid body.

Potent inhibitor of pancreatic carboxypeptidase A with a Ki of 27 nM, and of the serine proteases trypsin, chymotrypsin and pancreatic elastase, with Ki values of 6.9 nM, 1.83 nM and 4 nM, respectively. Also inhibits carboxypeptidase A4 CPA4 and CPA1. Does not inhibit cysteine and aspartic proteases. This Sabellastarte magnifica (Feather duster) protein is Carboxypeptidase inhibitor SmCI.